The following is a 63-amino-acid chain: Metallothionein-like protein type 3 (63 aa).

It belongs to the metallothionein superfamily. Type 15 family.

Its function is as follows. Metallothioneins have a high content of cysteine residues that bind various heavy metals. The sequence is that of Metallothionein-like protein type 3 from Actinidia deliciosa (Kiwi).